A 101-amino-acid chain; its full sequence is Small ribosomal subunit protein uS14 (101 aa).

Basic and acidic residues predominate over residues 1 to 11; it reads MAKKSSVEKNN. The interval 1–22 is disordered; it reads MAKKSSVEKNNRRQRMVKNAAA. Basic residues predominate over residues 12–22; the sequence is RRQRMVKNAAA.

It belongs to the universal ribosomal protein uS14 family. As to quaternary structure, part of the 30S ribosomal subunit. Contacts proteins S3 and S10.

In terms of biological role, binds 16S rRNA, required for the assembly of 30S particles and may also be responsible for determining the conformation of the 16S rRNA at the A site. The protein is Small ribosomal subunit protein uS14 of Afipia carboxidovorans (strain ATCC 49405 / DSM 1227 / KCTC 32145 / OM5) (Oligotropha carboxidovorans).